The primary structure comprises 234 residues: Opacity protein V28 (234 aa).

Residue alanine 1 is a signal peptide.

The protein belongs to the opacity porin family.

It is found in the cell outer membrane. Implicated in a number of adherence functions. OPA proteins are implicated in pathogenesis and are subject to phase variation. This is Opacity protein V28 from Neisseria gonorrhoeae.